Here is a 156-residue protein sequence, read N- to C-terminus: Small ribosomal subunit protein uS7 (156 aa).

It belongs to the universal ribosomal protein uS7 family. In terms of assembly, part of the 30S ribosomal subunit. Contacts proteins S9 and S11.

In terms of biological role, one of the primary rRNA binding proteins, it binds directly to 16S rRNA where it nucleates assembly of the head domain of the 30S subunit. Is located at the subunit interface close to the decoding center, probably blocks exit of the E-site tRNA. This chain is Small ribosomal subunit protein uS7, found in Yersinia enterocolitica serotype O:8 / biotype 1B (strain NCTC 13174 / 8081).